A 436-amino-acid chain; its full sequence is Small ribosomal subunit protein uS5m (436 aa).

One can recognise an S5 DRBM domain in the interval 152 to 218; sequence FETYCLEVKR…GMASRKLFHV (67 aa). Residues 417-436 are disordered; that stretch reads GVEPMPLGIGLSHVVPKKDD.

Belongs to the universal ribosomal protein uS5 family. As to quaternary structure, component of the mitochondrial ribosome small subunit (28S) which comprises a 12S rRNA and about 30 distinct proteins.

It is found in the mitochondrion. This Caenorhabditis elegans protein is Small ribosomal subunit protein uS5m (mrps-5).